The following is a 1067-amino-acid chain: Receptor-type guanylate cyclase gcy-10 (1067 aa).

An N-terminal signal peptide occupies residues 1–20 (MLKSLLIIVIVFLHRELCDG). Topologically, residues 21 to 438 (IQLILFDNWP…CVAKSSCVNY (418 aa)) are extracellular. N-linked (GlcNAc...) asparagine glycosylation is present at Asn411. Residues 439 to 459 (IPHIIAAVVIVTIIVIAIVII) traverse the membrane as a helical segment. The Cytoplasmic segment spans residues 460-1067 (VKQRRHKLNI…RGSIVPLQKA (608 aa)). The Protein kinase domain occupies 509–791 (ALTSRRRVFG…ESISTVYPLS (283 aa)). Residues 515 to 523 (RVFGSYALV) and Lys534 each bind ATP. Residues 859-989 (TVMFVQICDF…DTVNFASRMQ (131 aa)) enclose the Guanylate cyclase domain.

Belongs to the adenylyl cyclase class-4/guanylyl cyclase family. Expressed predominantly in AWC but also in AWB, ASI, ASJ and ASK sensory neurons and in I1 interneuron.

The protein localises to the cell membrane. It is found in the cell projection. Its subcellular location is the cilium. It catalyses the reaction GTP = 3',5'-cyclic GMP + diphosphate. Guanylate cyclase involved in the production of the second messenger cGMP. Regulates chemotaxis responses toward volatile odorants in AWC sensory neurons and their avoidance in AWB sensory neurons. May be involved in sensitivity to quinine by regulating egl-4 activity through the production of cGMP. Involved in phototransduction in ASJ neurons downstream of G protein coupled-photoreceptor lite-1. Required to maintain the expression of putative olfactory receptor str-2 in AWC neurons in adults. In AWB and AWC sensory neurons, mediates the recognition of food oders which subsequently allows for the detection of preferred food sources. Involved in AWB sensory neuron development and extension during postembryonic development, potentially via mediating localization of tub-1 and PI(4,5)P2 to membrane cilia. This is Receptor-type guanylate cyclase gcy-10 from Caenorhabditis elegans.